The chain runs to 265 residues: Shikimate dehydrogenase (NADP(+)) (265 aa).

Residues 15–17 (SKS) and threonine 62 each bind shikimate. Lysine 66 acts as the Proton acceptor in catalysis. Shikimate contacts are provided by asparagine 87 and aspartate 102. Residues 127 to 131 (GAGGA), 151 to 156 (NRTVSR), and methionine 212 contribute to the NADP(+) site. Tyrosine 214 serves as a coordination point for shikimate. Residue glycine 234 coordinates NADP(+).

It belongs to the shikimate dehydrogenase family. As to quaternary structure, homodimer.

It catalyses the reaction shikimate + NADP(+) = 3-dehydroshikimate + NADPH + H(+). It participates in metabolic intermediate biosynthesis; chorismate biosynthesis; chorismate from D-erythrose 4-phosphate and phosphoenolpyruvate: step 4/7. Its function is as follows. Involved in the biosynthesis of the chorismate, which leads to the biosynthesis of aromatic amino acids. Catalyzes the reversible NADPH linked reduction of 3-dehydroshikimate (DHSA) to yield shikimate (SA). The chain is Shikimate dehydrogenase (NADP(+)) from Thiobacillus denitrificans (strain ATCC 25259 / T1).